A 158-amino-acid polypeptide reads, in one-letter code: Phosphopantetheine adenylyltransferase (158 aa).

Position 9 (Thr9) interacts with substrate. ATP-binding positions include 9–10 (TF) and His17. 3 residues coordinate substrate: Lys41, Leu73, and Arg87. ATP-binding positions include 88–90 (GVR), Glu98, and 123–129 (WSYVSST).

This sequence belongs to the bacterial CoaD family. In terms of assembly, homohexamer. Requires Mg(2+) as cofactor.

The protein localises to the cytoplasm. It catalyses the reaction (R)-4'-phosphopantetheine + ATP + H(+) = 3'-dephospho-CoA + diphosphate. It functions in the pathway cofactor biosynthesis; coenzyme A biosynthesis; CoA from (R)-pantothenate: step 4/5. Its function is as follows. Reversibly transfers an adenylyl group from ATP to 4'-phosphopantetheine, yielding dephospho-CoA (dPCoA) and pyrophosphate. This chain is Phosphopantetheine adenylyltransferase, found in Pasteurella multocida (strain Pm70).